We begin with the raw amino-acid sequence, 67 residues long: Small ribosomal subunit protein eS17 (67 aa).

The protein belongs to the eukaryotic ribosomal protein eS17 family.

This Thermococcus sibiricus (strain DSM 12597 / MM 739) protein is Small ribosomal subunit protein eS17.